The following is a 296-amino-acid chain: Developmental pluripotency-associated protein 4 (296 aa).

Positions 1 to 13 are enriched in basic and acidic residues; that stretch reads METAGDKKWSAEE. The tract at residues 1–73 is disordered; it reads METAGDKKWS…QTRRKVPIPP (73 aa). A compositionally biased stretch (low complexity) spans 23 to 34; it reads SSQPSTAPAKAK. Basic and acidic residues predominate over residues 42 to 58; it reads KSETDNGCKPKEGKPQD.

As to quaternary structure, interacts with DPPA2. Interacts with PCGF1. In terms of tissue distribution, expressed in pluripotent embryonic cells, but not in differentiated somatic tissues.

It localises to the nucleus. In terms of biological role, may be involved in the maintenance of active epigenetic status of target genes. May inhibit differentiation of embryonic stem (ES) cells into a primitive ectoderm lineage. This is Developmental pluripotency-associated protein 4 (Dppa4) from Mus musculus (Mouse).